The primary structure comprises 148 residues: Small ribosomal subunit protein uS15 (148 aa).

A compositionally biased stretch (basic residues) spans 1 to 14; that stretch reads MGRLHSHRHGKSHS. Residues 1–27 are disordered; the sequence is MGRLHSHRHGKSHSIRPSSPKAPSWIQ.

This sequence belongs to the universal ribosomal protein uS15 family. Part of the 30S ribosomal subunit.

The chain is Small ribosomal subunit protein uS15 from Cenarchaeum symbiosum (strain A).